The chain runs to 758 residues: Polyribonucleotide nucleotidyltransferase (758 aa).

The Mg(2+) site is built by D482 and D488. Residues 549 to 608 (PRVLSFYIDKDKISAAIGTKGKNIRSVCERSNAKIEIGDDGKVSVFAISSTEAEAAKNMM) enclose the KH domain. One can recognise an S1 motif domain in the interval 618–686 (GSIIDAKVVK…KGGCPKLSRR (69 aa)). The tract at residues 707–758 (DGLNNRDNYYNNSFNKKPEDNYHSNRPTRPRSGFSNRSRPKFGNNDSSSGFY) is disordered. Positions 711-721 (NRDNYYNNSFN) are enriched in low complexity.

It belongs to the polyribonucleotide nucleotidyltransferase family. The cofactor is Mg(2+).

The protein localises to the cytoplasm. It carries out the reaction RNA(n+1) + phosphate = RNA(n) + a ribonucleoside 5'-diphosphate. In terms of biological role, involved in mRNA degradation. Catalyzes the phosphorolysis of single-stranded polyribonucleotides processively in the 3'- to 5'-direction. In Wolbachia pipientis subsp. Culex pipiens (strain wPip), this protein is Polyribonucleotide nucleotidyltransferase.